The sequence spans 408 residues: Voltage-gated potassium channel subunit beta-1 (408 aa).

Positions 97, 98, 104, and 126 each coordinate NADP(+). Y131 serves as the catalytic Proton donor/acceptor. NADP(+) is bound by residues N199, S229, R230, Q255, W284, S285, P286, L287, A288, C289, K295, R305, G364, S366, Q370, E373, and N374.

The protein belongs to the shaker potassium channel beta subunit family. Homotetramer. Interaction with tetrameric potassium channel alpha subunits gives rise to a heterooctamer. Identified in potassium channel complexes containing KCNA1, KCNA2, KCNA4, KCNA5, KCNA6, KCNAB1 and KCNAB2. Part of a complex containing KCNA1, KCNA4 and LGI1; interaction with LGI1 inhibits down-regulation of KCNA1 channel activity. Interacts with the dimer formed by GNB1 and GNG2; this enhances KCNA1 binding. Interacts with SQSTM1. Expression most abundant in aorta. Also high in left ventricle. Also detected in right ventricle, atrium, brain, skeletal muscle and kidney. Not detected in liver.

The protein resides in the cytoplasm. It localises to the membrane. Its subcellular location is the cell membrane. The catalysed reaction is a primary alcohol + NADP(+) = an aldehyde + NADPH + H(+). It carries out the reaction a secondary alcohol + NADP(+) = a ketone + NADPH + H(+). In terms of biological role, regulatory subunit of the voltage-gated potassium (Kv) Shaker channels composed of pore-forming and potassium-conducting alpha subunits and of regulatory beta subunits. The beta-1/KCNAB1 cytoplasmic subunit mediates closure of delayed rectifier potassium channels by physically obstructing the pore via its N-terminal domain and increases the speed of channel closure for other family members. Promotes the inactivation of Kv1.1/KCNA1, Kv1.2/KCNA2, Kv1.4/KCNA4, Kv1.5/KCNA5 and Kv1.6/KCNA6 alpha subunit-containing channels. Displays nicotinamide adenine dinucleotide phosphate (NADPH)-dependent aldoketoreductase activity by catalyzing the NADPH-dependent reduction of a variety of endogenous aldehydes and ketones. The binding of NADPH is required for efficient down-regulation of potassium channel activity. Oxidation of the bound NADPH restrains N-terminal domain from blocking the channel, thereby decreasing N-type inactivation of potassium channel activity. This Mustela putorius (European polecat) protein is Voltage-gated potassium channel subunit beta-1 (KCNAB1).